The primary structure comprises 340 residues: RNA 3'-terminal phosphate cyclase (340 aa).

ATP contacts are provided by residues glutamine 102 and 284–288; that span reads FLGDQ. Histidine 308 (tele-AMP-histidine intermediate) is an active-site residue.

The protein belongs to the RNA 3'-terminal cyclase family. Type 1 subfamily.

It localises to the cytoplasm. It catalyses the reaction a 3'-end 3'-phospho-ribonucleotide-RNA + ATP = a 3'-end 2',3'-cyclophospho-ribonucleotide-RNA + AMP + diphosphate. Catalyzes the conversion of 3'-phosphate to a 2',3'-cyclic phosphodiester at the end of RNA. The mechanism of action of the enzyme occurs in 3 steps: (A) adenylation of the enzyme by ATP; (B) transfer of adenylate to an RNA-N3'P to produce RNA-N3'PP5'A; (C) and attack of the adjacent 2'-hydroxyl on the 3'-phosphorus in the diester linkage to produce the cyclic end product. The biological role of this enzyme is unknown but it is likely to function in some aspects of cellular RNA processing. This is RNA 3'-terminal phosphate cyclase from Thermococcus onnurineus (strain NA1).